The sequence spans 218 residues: Protein N-lysine methyltransferase METTL21A (218 aa).

Residues tryptophan 47, 73–75, aspartate 94, tryptophan 125, and alanine 143 contribute to the S-adenosyl-L-methionine site; that span reads GAG.

The protein belongs to the methyltransferase superfamily. METTL21 family.

Its subcellular location is the cytoplasm. It carries out the reaction L-lysyl-[protein] + 3 S-adenosyl-L-methionine = N(6),N(6),N(6)-trimethyl-L-lysyl-[protein] + 3 S-adenosyl-L-homocysteine + 3 H(+). Functionally, protein-lysine methyltransferase that selectively trimethylates residues in heat shock protein 70 (HSP70) family members. This Danio rerio (Zebrafish) protein is Protein N-lysine methyltransferase METTL21A (mettl21a).